A 450-amino-acid chain; its full sequence is MFS-type transporter avaK (450 aa).

8 helical membrane passes run 18–38 (VMALNSLLILFTNFAIFLSMP), 100–120 (RVVCIYSDVLPLSLVWLSGLL), 148–168 (AVALLRLHSVFIVAKIFAAPA), 171–191 (ALVALTSAWTPFLISLAMLFV), 244–264 (APIIIVNLVASITKSSNHFLL), 280–300 (LVLVIREASSLLTYLVLMPAA), 329–349 (FGFFSIALAGTPVVYVLALAF), and 408–428 (GWLGIPYIAAGLFFITVLVAV).

The protein belongs to the major facilitator superfamily.

It is found in the membrane. It participates in secondary metabolite biosynthesis. MFS-type transporter; part of the cluster that mediates the biosynthesis of a highly modified cyclo-arginine-tryptophan dipeptide (cRW). This is MFS-type transporter avaK from Aspergillus versicolor.